A 1290-amino-acid chain; its full sequence is 1-phosphatidylinositol 4,5-bisphosphate phosphodiesterase gamma-1 (1290 aa).

Ala-2 carries the N-acetylalanine modification. The 116-residue stretch at 27–142 (RSLEVGTVMT…WIKGLTWLME (116 aa)) folds into the PH 1 domain. The region spanning 152-187 (QIERWLRKQFYSVDRNREDRISAKDLKNMLSQVNYR) is the EF-hand domain. Residues Asp-165, Asn-167, Glu-169, Arg-171, and Asp-176 each coordinate Ca(2+). The region spanning 320–464 (ETMNNPLSHY…LKRKILIKHK (145 aa)) is the PI-PLC X-box domain. Catalysis depends on residues His-335 and His-380. The PH 2; first part domain occupies 489–523 (SIKNGILYLEDPVNHEWYPHYFVLTSSKIYYSEET). Tyr-506 carries the post-translational modification Phosphotyrosine. The segment at 522–546 (ETSSDQGNEDEEEPKEASGSTELHS) is disordered. SH2 domains follow at residues 550–657 (WFHG…SEPV) and 668–756 (WYHA…RYPI). Position 771 is a phosphotyrosine; by SYK (Tyr-771). Tyr-775 is subject to Phosphotyrosine. Position 783 is a phosphotyrosine; by ITK, SYK and TXK (Tyr-783). The SH3 domain occupies 791–851 (TFKCAVKALF…PSNYVEEMIN (61 aa)). Positions 895–931 (FVFSISMPSVAQWSLDVAADSQEELQDWVKKIREVAQ) constitute a PH 2; second part domain. The PI-PLC Y-box domain maps to 953–1070 (LSELVVYCRP…GYVLQPSTMR (118 aa)). Tyr-977 carries the post-translational modification Phosphotyrosine. The C2 domain occupies 1071 to 1194 (DEAFDPFDKS…TGYRAVPLKN (124 aa)). Ser-1221, Ser-1227, Ser-1233, and Ser-1248 each carry phosphoserine. Tyr-1253 is modified (phosphotyrosine). The residue at position 1263 (Ser-1263) is a Phosphoserine. Positions 1271-1290 (FDSRERRAPRRTRVNGDNRL) are disordered.

As to quaternary structure, interacts with AGAP2 via its SH3 domain. Interacts (via SH2 domain) with RET. Interacts with FLT1 (tyrosine-phosphorylated). Interacts (via SH2 domain) with FGFR1, FGFR2, FGFR3 and FGFR4 (phosphorylated). Interacts with LAT (phosphorylated) upon TCR activation. Interacts (via SH3 domain) with the Pro-rich domain of TNK1. Associates with BLNK, VAV1, GRB2 and NCK1 in a B-cell antigen receptor-dependent fashion. Interacts with CBLB in activated T-cells; which inhibits phosphorylation. Interacts with SHB. Interacts (via SH3 domain) with the Arg/Gly-rich-flanked Pro-rich domains of KHDRBS1/SAM68. This interaction is selectively regulated by arginine methylation of KHDRBS1/SAM68. Interacts with INPP5D/SHIP1, THEMIS and CLNK. Interacts with AXL, FLT4 and KIT. Interacts with RALGPS1. Interacts (via the SH2 domains) with VIL1 (phosphorylated at C-terminus tyrosine phosphorylation sites). Interacts (via SH2 domain) with PDGFRA and PDGFRB (tyrosine phosphorylated). Interacts with PIP5K1C. Interacts with NTRK1 and NTRK2 (phosphorylated upon ligand-binding). Interacts with SYK; activates PLCG1. Interacts with GRB2, LAT and THEMIS upon TCR activation in thymocytes. Interacts with TESPA1; the association is increased with prolonged stimulation of the TCR and may facilitate the assembly of the LAT signalosome. Interacts (via C-terminal proline-rich domain (PRD)) with PLCG1 (via SH3 domain); this interaction leads to guanine nucleotide exchange from PlCG1 to DNM1 and enhances DNM1-dependent endocytosis. Requires Ca(2+) as cofactor. In terms of processing, ubiquitinated by CBLB in activated T-cells. Tyrosine phosphorylated in response to signaling via activated FLT3, KIT and PDGFRA. Tyrosine phosphorylated by activated FGFR1, FGFR2, FGFR3 and FGFR4. Tyrosine phosphorylated by activated FLT1 and KDR. Tyrosine phosphorylated by activated PDGFRB. The receptor-mediated activation of PLCG1 involves its phosphorylation by tyrosine kinases, in response to ligation of a variety of growth factor receptors and immune system receptors. For instance, SYK phosphorylates and activates PLCG1 in response to ligation of the B-cell receptor. May be dephosphorylated by PTPRJ. Phosphorylated by ITK and TXK on Tyr-783 upon TCR activation in T-cells.

Its subcellular location is the cell projection. It is found in the lamellipodium. The protein resides in the ruffle. It carries out the reaction a 1,2-diacyl-sn-glycero-3-phospho-(1D-myo-inositol-4,5-bisphosphate) + H2O = 1D-myo-inositol 1,4,5-trisphosphate + a 1,2-diacyl-sn-glycerol + H(+). It catalyses the reaction a 1,2-diacyl-sn-glycero-3-phospho-(1D-myo-inositol) + H2O = 1D-myo-inositol 1-phosphate + a 1,2-diacyl-sn-glycerol + H(+). Its activity is regulated as follows. Activated by phosphorylation on tyrosine residues. Mediates the production of the second messenger molecules diacylglycerol (DAG) and inositol 1,4,5-trisphosphate (IP3). Plays an important role in the regulation of intracellular signaling cascades. Becomes activated in response to ligand-mediated activation of receptor-type tyrosine kinases, such as PDGFRA, PDGFRB, EGFR, FGFR1, FGFR2, FGFR3 and FGFR4. Plays a role in actin reorganization and cell migration. Guanine nucleotide exchange factor that binds the GTPase DNM1 and catalyzes the dissociation of GDP, allowing a GTP molecule to bind in its place, therefore enhancing DNM1-dependent endocytosis. The chain is 1-phosphatidylinositol 4,5-bisphosphate phosphodiesterase gamma-1 from Rattus norvegicus (Rat).